The primary structure comprises 278 residues: Large ribosomal subunit protein uL2 (278 aa).

The disordered stretch occupies residues 224–262; the sequence is VMNPVDHPLGGGEGRTSGGRHPVTPWGKPTKGFKTRKTR.

Belongs to the universal ribosomal protein uL2 family. Part of the 50S ribosomal subunit. Forms a bridge to the 30S subunit in the 70S ribosome.

Its function is as follows. One of the primary rRNA binding proteins. Required for association of the 30S and 50S subunits to form the 70S ribosome, for tRNA binding and peptide bond formation. It has been suggested to have peptidyltransferase activity; this is somewhat controversial. Makes several contacts with the 16S rRNA in the 70S ribosome. The polypeptide is Large ribosomal subunit protein uL2 (Leptospira biflexa serovar Patoc (strain Patoc 1 / Ames)).